A 795-amino-acid chain; its full sequence is Phenylalanine--tRNA ligase beta subunit (795 aa).

Residues 39-148 (AAKFNGVLVG…SDAPVGTDLR (110 aa)) enclose the tRNA-binding domain. One can recognise a B5 domain in the interval 401–476 (PKVTEVRLRR…RVYGYNSIPN (76 aa)). Mg(2+) is bound by residues D454, D460, E463, and E464. Residues 701-794 (SKFPSNRRDI…LAEQFNASLR (94 aa)) form the FDX-ACB domain.

Belongs to the phenylalanyl-tRNA synthetase beta subunit family. Type 1 subfamily. As to quaternary structure, tetramer of two alpha and two beta subunits. Requires Mg(2+) as cofactor.

It is found in the cytoplasm. It carries out the reaction tRNA(Phe) + L-phenylalanine + ATP = L-phenylalanyl-tRNA(Phe) + AMP + diphosphate + H(+). This chain is Phenylalanine--tRNA ligase beta subunit, found in Pseudoalteromonas translucida (strain TAC 125).